The sequence spans 150 residues: Probable deoxyuridine 5'-triphosphate nucleotidohydrolase (150 aa).

It belongs to the dCTP deaminase family. Archaeal dUTPase subfamily.

It carries out the reaction dUTP + H2O = dUMP + diphosphate + H(+). It functions in the pathway pyrimidine metabolism; dUMP biosynthesis; dUMP from dCTP (dUTP route): step 2/2. In terms of biological role, this enzyme is involved in nucleotide metabolism: it produces dUMP, the immediate precursor of thymidine nucleotides and it decreases the intracellular concentration of dUTP so that uracil cannot be incorporated into DNA. This Methanothermobacter thermautotrophicus (strain ATCC 29096 / DSM 1053 / JCM 10044 / NBRC 100330 / Delta H) (Methanobacterium thermoautotrophicum) protein is Probable deoxyuridine 5'-triphosphate nucleotidohydrolase.